The following is a 471-amino-acid chain: Eukaryotic translation initiation factor 3 subunit M (471 aa).

The disordered stretch occupies residues 39–61 (EISSLLEPLRQQEQSEEEPDRKQ). A PCI domain is found at 206 to 377 (DFELAQSHVV…SEFLVHRATY (172 aa)). The disordered stretch occupies residues 419–471 (QAATEEANQGKSGEKGGKGGDRRRNPQHQQQQQQSQPSQPQQPRETELVAGAE). The span at 430 to 442 (SGEKGGKGGDRRR) shows a compositional bias: basic and acidic residues. Residues 445 to 461 (QHQQQQQQSQPSQPQQP) show a composition bias toward low complexity.

Belongs to the eIF-3 subunit M family. In terms of assembly, component of the eukaryotic translation initiation factor 3 (eIF-3) complex.

It localises to the cytoplasm. Component of the eukaryotic translation initiation factor 3 (eIF-3) complex, which is involved in protein synthesis of a specialized repertoire of mRNAs and, together with other initiation factors, stimulates binding of mRNA and methionyl-tRNAi to the 40S ribosome. The eIF-3 complex specifically targets and initiates translation of a subset of mRNAs involved in cell proliferation. The sequence is that of Eukaryotic translation initiation factor 3 subunit M from Aspergillus clavatus (strain ATCC 1007 / CBS 513.65 / DSM 816 / NCTC 3887 / NRRL 1 / QM 1276 / 107).